A 769-amino-acid chain; its full sequence is MSKMPAKKKSCFQITSVTTAQVATSITEDTESLDDPDESRTEDVSSEIFDVSRATDYGPEEVCERSSSEETLNNVGDAETPGTVSPNLILDGQLAAASAAPANGGGGGVSARSVAGALAQTLAAAAASVSTPGPSSATPSQPPATCSSRFRVIKLDHGSGEPYRRGRWTCMEYYERDSDSSVLTRSGDCIRHSNTLEQTAERDSGLGATGGSVVVVVASMQGAHGLDSGTDSSLTAVSQLPPSEKMSQPTLAQPQSFSVGQPQPPPPVGGAVAPSSASLPPFPGAATGPQPMTAAVQPTQLQGAVAGGALPGPVGQGLPPPPNVNLAQPVALAAQPGPAGGSSLSQQFAYPQPQIPPGHLLPMQPSGQSEYLPPHVALQPPSPAQPLSTSASATSASAASFPLGSGQSVSSLGAQMMGASAQPSEAVAPGPVPVGQAAPCQPAGVAPAALGGVVQPGSGLTGVGQPQPVQPPQQMGGSGQLPAVPGGPHTVVPGVPNVPAAVPVPSVPSVPTTSVTMPNVPAPLGQSQQLSSHTPVSRSSSVIQQVGSPLAQGTHSAPTSLPQSDLSQFQTQTQPLVGQVDDTRRKSEPLPQAPLSLIAESKPVVKPPVADALTNPLQLTPMNSLATSVFSIAIPVDGDEDRNPSTAFYQAFHLNTCQESKSLWDSASGGGVVAIDNKIEQAMDLVKSHLMYAVREEVEVLKEQIKELVERNSLLERENALLKSLSNNDQLSQLPAQQANPGSTSQQQAMIAQPPQPTQPPQQPNVSSA.

4 disordered regions span residues 20–86 (AQVA…TVSP), 224–292 (HGLD…PQPM), 334–353 (AQPG…YPQP), and 520–563 (VPAP…SLPQ). Acidic residues predominate over residues 28 to 37 (EDTESLDDPD). The segment covering 229–252 (GTDSSLTAVSQLPPSEKMSQPTLA) has biased composition (polar residues). Residues 269–279 (GGAVAPSSASL) are compositionally biased toward low complexity. Over residues 531–541 (SSHTPVSRSSS) the composition is skewed to low complexity. The segment covering 542–563 (VIQQVGSPLAQGTHSAPTSLPQ) has biased composition (polar residues). Residues 691-725 (MYAVREEVEVLKEQIKELVERNSLLERENALLKSL) are a coiled coil. A compositionally biased stretch (polar residues) spans 726–745 (SNNDQLSQLPAQQANPGSTS). The disordered stretch occupies residues 726 to 769 (SNNDQLSQLPAQQANPGSTSQQQAMIAQPPQPTQPPQQPNVSSA). Pro residues predominate over residues 754–763 (PPQPTQPPQQ).

This sequence belongs to the TSC-22/Dip/Bun family. In terms of assembly, interacts with NRBP1. Interacts with PKM isoform M2; the interaction results in reduced nuclear levels of PKM isoform M2, leading to repression of cyclin CCND1 transcription and reduced cell growth. Interacts with WDR77. As to expression, expressed in the cortex, medulla and papilla of the kidney. Expressed in the kidney.

In terms of biological role, reduces the level of nuclear PKM isoform M2 which results in repression of cyclin CCND1 transcription and reduced cell growth. Functionally, may protect kidney cells from hyperosmotic stress. In Mus musculus (Mouse), this protein is TSC22 domain family protein 2.